We begin with the raw amino-acid sequence, 209 residues long: MRLIIAVDGPAAAGKGTLARRLASAFGLPHLDTGLLYRAVGRLVLDAGGDPGSPADAAWAVSVLVPETVQRSDLRVPEVDRAASLVAADPAVRAALLDFQRDFAAREGAVLDGRDIGTVVCPDAPVKLFVTASAEARLQRRLLELRNRGVAVEEQALRAEMQARDERDAARDVAPLRPAEDAEVLDTTHLDADQAFQRAEQIVRRKWPR.

ATP is bound at residue 9 to 17 (GPAAAGKGT).

It belongs to the cytidylate kinase family. Type 1 subfamily.

The protein localises to the cytoplasm. It catalyses the reaction CMP + ATP = CDP + ADP. The enzyme catalyses dCMP + ATP = dCDP + ADP. The protein is Cytidylate kinase of Granulibacter bethesdensis (strain ATCC BAA-1260 / CGDNIH1).